We begin with the raw amino-acid sequence, 882 residues long: Bifunctional heparan sulfate N-deacetylase/N-sulfotransferase 1 (882 aa).

At 1-17 (MPALACLRRLCRHVSPQ) the chain is on the cytoplasmic side. Residues 1–169 (MPALACLRRL…VAYGVGIIGF (169 aa)) form a sufficient for localization to Golgi membrane region. The helical; Signal-anchor for type II membrane protein transmembrane segment at 18–39 (AVLFLLFIFCLFSVFISAYYLY) threads the bilayer. The heparan sulfate N-deacetylase 1 stretch occupies residues 40–598 (GWKRGLEPSA…KRHKDIWSKE (559 aa)). Topologically, residues 40–882 (GWKRGLEPSA…WLREDLQNTR (843 aa)) are lumenal. 3 N-linked (GlcNAc...) asparagine glycosylation sites follow: Asn-231, Asn-351, and Asn-401. The heparan sulfate N-sulfotransferase 1 stretch occupies residues 599 to 882 (KTCDRFPKLL…WLREDLQNTR (284 aa)). Lys-614 functions as the For sulfotransferase activity in the catalytic mechanism. 614-618 (KTGTT) lines the adenosine 3',5'-bisphosphate pocket. Asn-667 carries an N-linked (GlcNAc...) asparagine glycan. Residues Ser-712 and Trp-817 each contribute to the adenosine 3',5'-bisphosphate site. The cysteines at positions 818 and 828 are disulfide-linked. 833–837 (KGRKY) lines the adenosine 3',5'-bisphosphate pocket.

The protein belongs to the sulfotransferase 1 family. NDST subfamily. In terms of assembly, monomer. As to quaternary structure, interacts with heparan sulfate co-polymerase subunits EXT1 and EXT2. Interacts with NDST1 isoform 3. Interacts with heparan sulfate co-polymerase subunits EXT1 and EXT2. Interacts with NDST1 isoform 1. Widely expressed. Expression is most abundant in heart, liver and pancreas.

The protein localises to the golgi apparatus. It is found in the trans-Golgi network membrane. The protein resides in the cis-Golgi network membrane. The enzyme catalyses N-acetyl-alpha-D-glucosaminyl-[heparan sulfate](n) + H2O = alpha-D-glucosaminyl-[heparan sulfate](n) + acetate. It catalyses the reaction alpha-D-glucosaminyl-[heparan sulfate](n) + 3'-phosphoadenylyl sulfate = N-sulfo-alpha-D-glucosaminyl-[heparan sulfate](n) + adenosine 3',5'-bisphosphate + 2 H(+). The protein operates within glycan metabolism; heparan sulfate biosynthesis. It participates in glycan metabolism; heparin biosynthesis. Functionally, essential bifunctional enzyme that catalyzes both the N-deacetylation and the N-sulfation of glucosamine (GlcNAc) of the glycosaminoglycan in heparan sulfate. Modifies the GlcNAc-GlcA disaccharide repeating sugar backbone to make N-sulfated heparosan, a prerequisite substrate for later modifications in heparin biosynthesis. Plays a role in determining the extent and pattern of sulfation of heparan sulfate. Participates in biosynthesis of heparan sulfate that can ultimately serve as L-selectin ligands, thereby playing a role in inflammatory response. Required for the exosomal release of SDCBP, CD63 and syndecan. Lacks both N-deacetylase and N-sulfotransferase activities. Acts as a dominant negative on isoform 1, likely by changing the composition of enzyme complexes responsible for elongation and modification of heparan sulfates. The protein is Bifunctional heparan sulfate N-deacetylase/N-sulfotransferase 1 of Homo sapiens (Human).